A 1603-amino-acid polypeptide reads, in one-letter code: GATOR1 complex protein DEPDC5 (1603 aa).

3 disordered regions span residues 427–450 (GKKP…KESE), 484–527 (VRER…SSLG), and 696–720 (LSNS…VSTS). The span at 430 to 439 (PASEKAKNGR) shows a compositional bias: basic and acidic residues. Residues 494-508 (SASSCDVSSSPSLPS) are compositionally biased toward low complexity. S505 bears the Phosphoserine mark. 2 stretches are compositionally biased toward polar residues: residues 518–527 (SQASDDSSLG) and 696–707 (LSNSGAGMNPRT). S1002 is subject to Phosphoserine; by PIM1. Residues 1135–1153 (DRGNSQTFGNSQNIGEQGY) are compositionally biased toward polar residues. The disordered stretch occupies residues 1135-1165 (DRGNSQTFGNSQNIGEQGYSSTNSSDSSSQQ). The span at 1154–1165 (SSTNSSDSSSQQ) shows a compositional bias: low complexity. The 76-residue stretch at 1187 to 1262 (PSTGVQLLSE…YGFYFYKIVT (76 aa)) folds into the DEP domain. Residue S1530 is modified to Phosphoserine; by PKB/AKT1 and PIM1.

This sequence belongs to the IML1 family. As to quaternary structure, within the GATOR complex, component of the GATOR1 subcomplex, made of DEPDC5, NPRL2 and NPRL3. GATOR1 mediates the strong interaction of the GATOR complex with small GTPases Rag (RagA/RRAGA, RagB/RRAGB, RagC/RRAGC and/or RagD/RRAGD) heterodimers. Interacts with SAMTOR; interaction is direct and takes place in presence of methionine, leading to inhibit the activity of the GATOR1 complex. Phosphorylation at Ser-1002 and Ser-1530 by AKT1 and PIM1 inhibit the activity of DEPDC5, releasing inhibition of the mTORC1 pathway. In terms of processing, ubiquitinated. Amino acid-induced 'Lys-48'-linked polyubiquitination of DEPDC5 by the BCR(KLHL22) ubiquitin ligase complex leads to DEPDC5 proteasomal degradation and inhibition of the GATOR1 complex. Ubiquitination may occur at multiple lysines. In terms of tissue distribution, expressed in developing and adult brain.

It is found in the lysosome membrane. The protein resides in the cytoplasm. It localises to the cytosol. The protein localises to the perinuclear region. Functionally, as a component of the GATOR1 complex functions as an inhibitor of the amino acid-sensing branch of the mTORC1 pathway. In response to amino acid depletion, the GATOR1 complex has GTPase activating protein (GAP) activity and strongly increases GTP hydrolysis by RagA/RRAGA (or RagB/RRAGB) within heterodimeric Rag complexes, thereby turning them into their inactive GDP-bound form, releasing mTORC1 from lysosomal surface and inhibiting mTORC1 signaling. In the presence of abundant amino acids, the GATOR1 complex is negatively regulated by GATOR2, the other GATOR subcomplex, in this amino acid-sensing branch of the TORC1 pathway. Within the GATOR1 complex, DEPDC5 mediates direct interaction with the nucleotide-binding pocket of small GTPases Rag (RagA/RRAGA, RagB/RRAGB, RagC/RRAGC and/or RagD/RRAGD) and coordinates their nucleotide loading states by promoting RagA/RRAGA or RagB/RRAGB into their GDP-binding state and RagC/RRAGC or RagD/RRAGD into their GTP-binding state. However, it does not execute the GAP activity, which is mediated by NPRL2. The polypeptide is GATOR1 complex protein DEPDC5 (Homo sapiens (Human)).